A 136-amino-acid chain; its full sequence is NADPH-dependent 7-cyano-7-deazaguanine reductase (136 aa).

Residue Cys50 is the Thioimide intermediate of the active site. Asp57 acts as the Proton donor in catalysis. Residues 72–74 (YEL) and 91–92 (HE) contribute to the substrate site.

The protein belongs to the GTP cyclohydrolase I family. QueF type 1 subfamily.

Its subcellular location is the cytoplasm. The catalysed reaction is 7-aminomethyl-7-carbaguanine + 2 NADP(+) = 7-cyano-7-deazaguanine + 2 NADPH + 3 H(+). Its pathway is tRNA modification; tRNA-queuosine biosynthesis. Catalyzes the NADPH-dependent reduction of 7-cyano-7-deazaguanine (preQ0) to 7-aminomethyl-7-deazaguanine (preQ1). The sequence is that of NADPH-dependent 7-cyano-7-deazaguanine reductase from Prochlorococcus marinus (strain AS9601).